A 211-amino-acid polypeptide reads, in one-letter code: ATP-dependent Clp protease proteolytic subunit (211 aa).

Ser106 functions as the Nucleophile in the catalytic mechanism. His131 is a catalytic residue.

This sequence belongs to the peptidase S14 family. In terms of assembly, fourteen ClpP subunits assemble into 2 heptameric rings which stack back to back to give a disk-like structure with a central cavity, resembling the structure of eukaryotic proteasomes.

The protein resides in the cytoplasm. It carries out the reaction Hydrolysis of proteins to small peptides in the presence of ATP and magnesium. alpha-casein is the usual test substrate. In the absence of ATP, only oligopeptides shorter than five residues are hydrolyzed (such as succinyl-Leu-Tyr-|-NHMec, and Leu-Tyr-Leu-|-Tyr-Trp, in which cleavage of the -Tyr-|-Leu- and -Tyr-|-Trp bonds also occurs).. Functionally, cleaves peptides in various proteins in a process that requires ATP hydrolysis. Has a chymotrypsin-like activity. Plays a major role in the degradation of misfolded proteins. This chain is ATP-dependent Clp protease proteolytic subunit, found in Nitrobacter hamburgensis (strain DSM 10229 / NCIMB 13809 / X14).